A 288-amino-acid polypeptide reads, in one-letter code: 18S rRNA aminocarboxypropyltransferase (288 aa).

S-adenosyl-L-methionine contacts are provided by Ser-43, Val-91, Leu-114, and Trp-129. The span at Ile-209–Leu-221 shows a compositional bias: polar residues. The segment at Ile-209–Asn-267 is disordered. The span at Asn-229–Pro-253 shows a compositional bias: basic and acidic residues.

The protein belongs to the TDD superfamily. TSR3 family.

The protein localises to the cytoplasm. It localises to the nucleus. It carries out the reaction an N(1)-methylpseudouridine in rRNA + S-adenosyl-L-methionine = N(1)-methyl-N(3)-[(3S)-3-amino-3-carboxypropyl]pseudouridine in rRNA + S-methyl-5'-thioadenosine + H(+). It catalyses the reaction N(1)-methylpseudouridine(1191) in yeast 18S rRNA + S-adenosyl-L-methionine = N(1)-methyl-N(3)-[(3S)-3-amino-3-carboxypropyl]pseudouridine(1191) in yeast 18S rRNA + S-methyl-5'-thioadenosine + H(+). In terms of biological role, aminocarboxypropyltransferase that catalyzes the aminocarboxypropyl transfer on pseudouridine at position 1191 (Psi1191) in 18S rRNA. It constitutes the last step in biosynthesis of the hypermodified N1-methyl-N3-(3-amino-3-carboxypropyl) pseudouridine (m1acp3-Psi) conserved in eukaryotic 18S rRNA. Required for processing 35S pre-rRNA at site D. This is 18S rRNA aminocarboxypropyltransferase from Schizosaccharomyces pombe (strain 972 / ATCC 24843) (Fission yeast).